A 504-amino-acid polypeptide reads, in one-letter code: Cobyric acid synthase (504 aa).

The GATase cobBQ-type domain maps to 251–448; sequence DITIAIVQLP…LHGLFDSDAF (198 aa). Cys332 (nucleophile) is an active-site residue. His440 is an active-site residue.

The protein belongs to the CobB/CobQ family. CobQ subfamily.

It functions in the pathway cofactor biosynthesis; adenosylcobalamin biosynthesis. Catalyzes amidations at positions B, D, E, and G on adenosylcobyrinic A,C-diamide. NH(2) groups are provided by glutamine, and one molecule of ATP is hydrogenolyzed for each amidation. The polypeptide is Cobyric acid synthase (Salmonella gallinarum (strain 287/91 / NCTC 13346)).